The chain runs to 152 residues: MHTLSNLLSSIKNAQKAQKRVLYFSSFKKISKRKKRFVCSACKMMPRVFVSRLCWDFCRILYNEGYIHGFSQEADGSLRIVLKYHSSGIGVIKKMKTISKPGFRIYSSKNRLSKKREGLGITILSTSKGNLICDREAQKTNFGGGEILCQVF.

The protein belongs to the universal ribosomal protein uS8 family.

It is found in the mitochondrion. The polypeptide is Small ribosomal subunit protein uS8m (RPS8) (Marchantia polymorpha (Common liverwort)).